The primary structure comprises 649 residues: Mediator of RNA polymerase II transcription subunit 17 (649 aa).

Residues 51-79 (QGSGSEEEEAAGPDGDAPDWGGAGADQDD) are disordered.

This sequence belongs to the Mediator complex subunit 17 family. In terms of assembly, component of the Mediator complex, which is composed of MED1, MED4, MED6, MED7, MED8, MED9, MED10, MED11, MED12, MED13, MED13L, MED14, MED15, MED16, MED17, MED18, MED19, MED20, MED21, MED22, MED23, MED24, MED25, MED26, MED27, MED29, MED30, MED31, CCNC, CDK8 and CDC2L6/CDK11. The MED12, MED13, CCNC and CDK8 subunits form a distinct module termed the CDK8 module. Mediator containing the CDK8 module is less active than Mediator lacking this module in supporting transcriptional activation. Individual preparations of the Mediator complex lacking one or more distinct subunits have been variously termed ARC, CRSP, DRIP, PC2, SMCC and TRAP. Interacts with STAT2. Interacts with GATA1 and PPARG.

Its subcellular location is the nucleus. Its function is as follows. Component of the Mediator complex, a coactivator involved in the regulated transcription of nearly all RNA polymerase II-dependent genes. Mediator functions as a bridge to convey information from gene-specific regulatory proteins to the basal RNA polymerase II transcription machinery. Mediator is recruited to promoters by direct interactions with regulatory proteins and serves as a scaffold for the assembly of a functional preinitiation complex with RNA polymerase II and the general transcription factors. This is Mediator of RNA polymerase II transcription subunit 17 (Med17) from Mus musculus (Mouse).